A 677-amino-acid chain; its full sequence is DNA ligase (677 aa).

NAD(+) is bound by residues 32 to 36 (DSEYD), 81 to 82 (SL), and Glu112. The N6-AMP-lysine intermediate role is filled by Lys114. NAD(+) contacts are provided by Arg135, Glu171, Lys288, and Lys312. 4 residues coordinate Zn(2+): Cys416, Cys419, Cys434, and Cys439. One can recognise a BRCT domain in the interval 598–677 (YKPLPLSGVE…QEFINMLEQS (80 aa)).

Belongs to the NAD-dependent DNA ligase family. LigA subfamily. Mg(2+) is required as a cofactor. It depends on Mn(2+) as a cofactor.

It catalyses the reaction NAD(+) + (deoxyribonucleotide)n-3'-hydroxyl + 5'-phospho-(deoxyribonucleotide)m = (deoxyribonucleotide)n+m + AMP + beta-nicotinamide D-nucleotide.. In terms of biological role, DNA ligase that catalyzes the formation of phosphodiester linkages between 5'-phosphoryl and 3'-hydroxyl groups in double-stranded DNA using NAD as a coenzyme and as the energy source for the reaction. It is essential for DNA replication and repair of damaged DNA. This chain is DNA ligase, found in Dehalococcoides mccartyi (strain ATCC BAA-2266 / KCTC 15142 / 195) (Dehalococcoides ethenogenes (strain 195)).